Reading from the N-terminus, the 1031-residue chain is Error-prone DNA polymerase (1031 aa).

The protein belongs to the DNA polymerase type-C family. DnaE2 subfamily.

It is found in the cytoplasm. The catalysed reaction is DNA(n) + a 2'-deoxyribonucleoside 5'-triphosphate = DNA(n+1) + diphosphate. Functionally, DNA polymerase involved in damage-induced mutagenesis and translesion synthesis (TLS). It is not the major replicative DNA polymerase. The sequence is that of Error-prone DNA polymerase from Pseudomonas savastanoi pv. phaseolicola (strain 1448A / Race 6) (Pseudomonas syringae pv. phaseolicola (strain 1448A / Race 6)).